A 329-amino-acid chain; its full sequence is 4-hydroxythreonine-4-phosphate dehydrogenase (329 aa).

Positions 136 and 137 each coordinate substrate. A divalent metal cation-binding residues include His166, His211, and His266. Substrate-binding residues include Lys274, Asn283, and Arg292.

This sequence belongs to the PdxA family. Homodimer. The cofactor is Zn(2+). Requires Mg(2+) as cofactor. Co(2+) is required as a cofactor.

Its subcellular location is the cytoplasm. The enzyme catalyses 4-(phosphooxy)-L-threonine + NAD(+) = 3-amino-2-oxopropyl phosphate + CO2 + NADH. The protein operates within cofactor biosynthesis; pyridoxine 5'-phosphate biosynthesis; pyridoxine 5'-phosphate from D-erythrose 4-phosphate: step 4/5. In terms of biological role, catalyzes the NAD(P)-dependent oxidation of 4-(phosphooxy)-L-threonine (HTP) into 2-amino-3-oxo-4-(phosphooxy)butyric acid which spontaneously decarboxylates to form 3-amino-2-oxopropyl phosphate (AHAP). The sequence is that of 4-hydroxythreonine-4-phosphate dehydrogenase from Escherichia coli O17:K52:H18 (strain UMN026 / ExPEC).